The chain runs to 449 residues: MTHIRFDYSKALAFFGEHELTYLRDAVKVAHHSLHEKTGVGNDFLGWLDWPVNYDKEEFARIKQAAKKIQSDSDVLLVIGIGGSYLGARAAIEMLHHSFYNALPKEKRSTPQIIFVGNNISSTYMKDVIDFLEGKDFSINVISKSGTTTEPAIAFRIFRKLLEDKYGKEEARRRIYATTDRARGALRTLADEEGYETFVIPDDIGGRYSVLTAVGLLPIAASGADIDAMMEGAAKAREDFSRSELEENAAYQYAAIRNILYNKGKTIELLVNYEPALHYFAEWWKQLFGESEGKDQKGIYPASADFSTDLHSLGQYIQEGRRDLFETVLKLEEPRHELVIEAEESDLDGLNYLAGQTVDFVNTKAFEGTLLAHTDGGVPNLVVTLPKLDEYTFGYLVYFFEKACAMSGYLLGVNPFDQPGVEAYKKNMFALLGKPGYEELKDELEKRLK.

Thr-38 carries the phosphothreonine modification. Glu-290 functions as the Proton donor in the catalytic mechanism. Active-site residues include His-311 and Lys-425.

It belongs to the GPI family.

It is found in the cytoplasm. The enzyme catalyses alpha-D-glucose 6-phosphate = beta-D-fructose 6-phosphate. It functions in the pathway carbohydrate biosynthesis; gluconeogenesis. The protein operates within carbohydrate degradation; glycolysis; D-glyceraldehyde 3-phosphate and glycerone phosphate from D-glucose: step 2/4. Its function is as follows. Catalyzes the reversible isomerization of glucose-6-phosphate to fructose-6-phosphate. This chain is Glucose-6-phosphate isomerase, found in Geobacillus thermodenitrificans (strain NG80-2).